Consider the following 202-residue polypeptide: ATP-dependent Clp protease proteolytic subunit (202 aa).

The active-site Nucleophile is serine 101. Histidine 126 is a catalytic residue.

It belongs to the peptidase S14 family. Component of the chloroplastic Clp protease core complex.

It localises to the plastid. Its subcellular location is the chloroplast stroma. It carries out the reaction Hydrolysis of proteins to small peptides in the presence of ATP and magnesium. alpha-casein is the usual test substrate. In the absence of ATP, only oligopeptides shorter than five residues are hydrolyzed (such as succinyl-Leu-Tyr-|-NHMec, and Leu-Tyr-Leu-|-Tyr-Trp, in which cleavage of the -Tyr-|-Leu- and -Tyr-|-Trp bonds also occurs).. Cleaves peptides in various proteins in a process that requires ATP hydrolysis. Has a chymotrypsin-like activity. Plays a major role in the degradation of misfolded proteins. This is ATP-dependent Clp protease proteolytic subunit from Liriodendron tulipifera (Tuliptree).